A 302-amino-acid polypeptide reads, in one-letter code: Pyridoxal 5'-phosphate synthase subunit PdxS (302 aa).

Residue Asp-32 participates in D-ribose 5-phosphate binding. The active-site Schiff-base intermediate with D-ribose 5-phosphate is the Lys-89. Residue Gly-161 coordinates D-ribose 5-phosphate. Arg-173 serves as a coordination point for D-glyceraldehyde 3-phosphate. Residues Gly-222 and 243–244 (GS) contribute to the D-ribose 5-phosphate site. A disordered region spans residues 278–302 (GIGKGMKGQSNEDLPDEEKLQGRGV).

It belongs to the PdxS/SNZ family. In the presence of PdxT, forms a dodecamer of heterodimers.

The catalysed reaction is aldehydo-D-ribose 5-phosphate + D-glyceraldehyde 3-phosphate + L-glutamine = pyridoxal 5'-phosphate + L-glutamate + phosphate + 3 H2O + H(+). Its pathway is cofactor biosynthesis; pyridoxal 5'-phosphate biosynthesis. Functionally, catalyzes the formation of pyridoxal 5'-phosphate from ribose 5-phosphate (RBP), glyceraldehyde 3-phosphate (G3P) and ammonia. The ammonia is provided by the PdxT subunit. Can also use ribulose 5-phosphate and dihydroxyacetone phosphate as substrates, resulting from enzyme-catalyzed isomerization of RBP and G3P, respectively. This is Pyridoxal 5'-phosphate synthase subunit PdxS from Halorubrum lacusprofundi (strain ATCC 49239 / DSM 5036 / JCM 8891 / ACAM 34).